A 2554-amino-acid chain; its full sequence is Highly reducing polyketide synthase PKS6 (2554 aa).

The segment at 1–48 is disordered; sequence MGSLSAVPATNGNHAALNGSASTNGQHVNGSTHVNGNHSLNGSAQVNG. Over residues 8–48 the composition is skewed to polar residues; the sequence is PATNGNHAALNGSASTNGQHVNGSTHVNGNHSLNGSAQVNG. The region spanning 56–481 is the Ketosynthase family 3 (KS3) domain; it reads LEPIAVVGMS…GTNAHVVVDA (426 aa). Residues C230, H367, and H407 each act as for beta-ketoacyl synthase activity in the active site. Residues 595–913 are malonyl-CoA:ACP transacylase (MAT) domain; it reads VFSGQGAQYP…HYTGSLKRGE (319 aa). The tract at residues 981-1119 is N-terminal hotdog fold; that stretch reads HELLGTLVHD…GLVQVILKSE (139 aa). Positions 981–1281 are dehydratase (DH) domain; that stretch reads HELLGTLVHD…QAWGVVATKL (301 aa). One can recognise a PKS/mFAS DH domain in the interval 981-1287; that stretch reads HELLGTLVHD…ATKLPDVSIG (307 aa). Catalysis depends on H1013, which acts as the Proton acceptor; for dehydratase activity. A C-terminal hotdog fold region spans residues 1137 to 1287; sequence AQHIPANQFY…ATKLPDVSIG (151 aa). D1200 (proton donor; for dehydratase activity) is an active-site residue. The methyltransferase (CMet) domain stretch occupies residues 1451–1556; sequence VEVGAGTGSA…KTMLRPGGKL (106 aa). Residues 1840-2153 form an enoyl reductase (ER) domain region; the sequence is GVLDTIRWVD…AGKHTGKVIL (314 aa). The interval 2177 to 2353 is ketoreductase (KR) domain; the sequence is ATYLVVGGLG…TAYAVNIGAI (177 aa). Residues 2457-2534 enclose the Carrier domain; the sequence is EAQDIICDAI…ELAEIVTKGS (78 aa). S2494 is modified (O-(pantetheine 4'-phosphoryl)serine).

It functions in the pathway secondary metabolite biosynthesis. Functionally, highly reducing polyketide synthase; part of the gene cluster that mediates the biosynthesis of the lipopeptide fusaristatin A. Fusaristatin A consists of a polyketide chain linked to three amino acid residues glutamine (Gln), dehydroalanine (dehydro-Ala), and beta-aminoisobutyric acid. The biosynthesis starts with formation of a linear polyketide chain by the highly reducing polyketide synthase PKS6. The gene cluster does not contain an acyl-CoA ligase or an acyl-transferase, and it is therefore predicted that the polyketide is transferred directly to the nonribosomal peptide synthetase NRPS7. Modules 1-3 from NRPS7 incorporate dehydro-Ala, Gln, and beta-aminoisobutyric acid in the compound, which is released by cyclization. The beta-aminoisobutyric acid units are most likely not freely available to the NRPS, but can be synthesized from thymine, which requires a dehydrogenase, a monooxygenase, and an aminotransferase. The fusaristatin A cluster contains a cytochrome P450 monooxygenase (FGSG_08207) and an aminotransferase (FGSG_17085), which theoretically can perform two of the enzymatic steps. The enzymes may however also be involved in biosynthesis of dehydroalanine or modification of the polyketide. The dehydro-Ala residue can be a result of cyclization, where serine is dehydrated. The last gene of the cluster encodes a protein with an A/B barrel domain found in variable enzymes, which hampers functional prediction. This chain is Highly reducing polyketide synthase PKS6, found in Gibberella zeae (strain ATCC MYA-4620 / CBS 123657 / FGSC 9075 / NRRL 31084 / PH-1) (Wheat head blight fungus).